Here is a 280-residue protein sequence, read N- to C-terminus: UDP-3-O-acyl-N-acetylglucosamine deacetylase (280 aa).

Residues His-77, His-238, and Asp-242 each contribute to the Zn(2+) site. The active-site Proton donor is the His-265.

Belongs to the LpxC family. Zn(2+) serves as cofactor.

It catalyses the reaction a UDP-3-O-[(3R)-3-hydroxyacyl]-N-acetyl-alpha-D-glucosamine + H2O = a UDP-3-O-[(3R)-3-hydroxyacyl]-alpha-D-glucosamine + acetate. The protein operates within glycolipid biosynthesis; lipid IV(A) biosynthesis; lipid IV(A) from (3R)-3-hydroxytetradecanoyl-[acyl-carrier-protein] and UDP-N-acetyl-alpha-D-glucosamine: step 2/6. Catalyzes the hydrolysis of UDP-3-O-myristoyl-N-acetylglucosamine to form UDP-3-O-myristoylglucosamine and acetate, the committed step in lipid A biosynthesis. This chain is UDP-3-O-acyl-N-acetylglucosamine deacetylase, found in Trichormus variabilis (strain ATCC 29413 / PCC 7937) (Anabaena variabilis).